A 941-amino-acid polypeptide reads, in one-letter code: Isoleucine--tRNA ligase (941 aa).

Positions 58-68 (PYANGDIHIGH) match the 'HIGH' region motif. E562 lines the L-isoleucyl-5'-AMP pocket. Residues 603–607 (KMSKS) carry the 'KMSKS' region motif. K606 provides a ligand contact to ATP. Residues C904, C907, C924, and C927 each contribute to the Zn(2+) site.

The protein belongs to the class-I aminoacyl-tRNA synthetase family. IleS type 1 subfamily. In terms of assembly, monomer. Zn(2+) serves as cofactor.

The protein resides in the cytoplasm. It catalyses the reaction tRNA(Ile) + L-isoleucine + ATP = L-isoleucyl-tRNA(Ile) + AMP + diphosphate. In terms of biological role, catalyzes the attachment of isoleucine to tRNA(Ile). As IleRS can inadvertently accommodate and process structurally similar amino acids such as valine, to avoid such errors it has two additional distinct tRNA(Ile)-dependent editing activities. One activity is designated as 'pretransfer' editing and involves the hydrolysis of activated Val-AMP. The other activity is designated 'posttransfer' editing and involves deacylation of mischarged Val-tRNA(Ile). The polypeptide is Isoleucine--tRNA ligase (Alkalilimnicola ehrlichii (strain ATCC BAA-1101 / DSM 17681 / MLHE-1)).